The sequence spans 300 residues: uncharacterized protein (300 aa).

Transmembrane regions (helical) follow at residues 13–35, 45–67, 80–102, 106–128, 180–202, 217–236, 243–265, and 275–294; these read LLCI…LQPL, MLTM…SLLS, WVLF…WAPL, GINI…WAWL, IPAL…IYIL, YWLL…SANL, PVSI…AVFV, and YFTY…EGLL.

Belongs to the EamA transporter family.

The protein localises to the cell membrane. This is an uncharacterized protein from Haemophilus influenzae (strain ATCC 51907 / DSM 11121 / KW20 / Rd).